A 154-amino-acid polypeptide reads, in one-letter code: Ribosomal RNA large subunit methyltransferase H (154 aa).

Gly103 lines the S-adenosyl-L-methionine pocket.

It belongs to the RNA methyltransferase RlmH family. As to quaternary structure, homodimer.

Its subcellular location is the cytoplasm. It carries out the reaction pseudouridine(1915) in 23S rRNA + S-adenosyl-L-methionine = N(3)-methylpseudouridine(1915) in 23S rRNA + S-adenosyl-L-homocysteine + H(+). Functionally, specifically methylates the pseudouridine at position 1915 (m3Psi1915) in 23S rRNA. This chain is Ribosomal RNA large subunit methyltransferase H, found in Gemmatimonas aurantiaca (strain DSM 14586 / JCM 11422 / NBRC 100505 / T-27).